An 879-amino-acid polypeptide reads, in one-letter code: Protein translocase subunit SecA (879 aa).

Residues Q86, 104–108, and D500 each bind ATP; that span reads GEGKT. Residues C863, C865, C874, and H875 each coordinate Zn(2+).

It belongs to the SecA family. Monomer and homodimer. Part of the essential Sec protein translocation apparatus which comprises SecA, SecYEG and auxiliary proteins SecDF-YajC and YidC. Requires Zn(2+) as cofactor.

Its subcellular location is the cell inner membrane. It is found in the cytoplasm. It catalyses the reaction ATP + H2O + cellular proteinSide 1 = ADP + phosphate + cellular proteinSide 2.. Its function is as follows. Part of the Sec protein translocase complex. Interacts with the SecYEG preprotein conducting channel. Has a central role in coupling the hydrolysis of ATP to the transfer of proteins into and across the cell membrane, serving both as a receptor for the preprotein-SecB complex and as an ATP-driven molecular motor driving the stepwise translocation of polypeptide chains across the membrane. The protein is Protein translocase subunit SecA of Orientia tsutsugamushi (strain Ikeda) (Rickettsia tsutsugamushi).